Reading from the N-terminus, the 606-residue chain is Ubiquitin carboxyl-terminal hydrolase 2 (606 aa).

The segment at 1–201 is necessary for interaction with MDM4; that stretch reads MSQLSSTLKR…RSEYLADYLE (201 aa). Disordered stretches follow at residues 53–112 and 207–228; these read PSPP…GGSG and ASAPQVPTPTPPSRAPEVLSPT. The span at 90–100 shows a compositional bias: basic and acidic residues; it reads KRAESQTRGTE. Positions 268-600 constitute a USP domain; it reads AGLRNLGNTC…DAYLLFYELA (333 aa). Cys-277 functions as the Nucleophile in the catalytic mechanism. Residues 404 to 504 are necessary for interaction with MDM4; the sequence is YLEREDSRIG…FPKILVLHLK (101 aa). Residues Cys-426, Cys-429, Cys-477, and Cys-480 each coordinate Zn(2+). The Proton acceptor role is filled by His-558.

This sequence belongs to the peptidase C19 family. USP2 subfamily. In terms of assembly, homooligomer. Found in trimeric complex with MDM2 and MDM4 and USP2. Interacts with CCND1; the interaction is direct and promotes its stabilization by antagonizing ubiquitin-dependent degradation. Interacts (via N-terminus and C-terminus) with MDM2. Interacts with MDM4 and PER1. Interacts with KCNQ1; counteracts the NEDD4L-specific down-regulation of I(Ks) and restores plasma membrane localization of KCNQ1.

The protein resides in the cytoplasm. Its subcellular location is the perinuclear region. It carries out the reaction Thiol-dependent hydrolysis of ester, thioester, amide, peptide and isopeptide bonds formed by the C-terminal Gly of ubiquitin (a 76-residue protein attached to proteins as an intracellular targeting signal).. Its activity is regulated as follows. Cleavage is inhibited by ubiquitin in a dosage-dependent manner. Cleavage is blocked by ubiquitin aldehyde. Functionally, hydrolase that deubiquitinates polyubiquitinated target proteins such as MDM2, MDM4 and CCND1. Possesses both ubiquitin-specific peptidase and isopeptidase activities. Deubiquitinates MDM2 without reversing MDM2-mediated p53/TP53 ubiquitination and thus indirectly promotes p53/TP53 degradation and limits p53 activity. Has no deubiquitinase activity against p53/TP53. Prevents MDM2-mediated degradation of MDM4. Plays a role in the G1/S cell-cycle progression in normal and cancer cells. Plays a role in the regulation of myogenic differentiation of embryonic muscle cells. Regulates the circadian clock by modulating its intrinsic circadian rhythm and its capacity to respond to external cues. Associates with clock proteins and deubiquitinates core clock component PER1 but does not affect its overall stability. Regulates the nucleocytoplasmic shuttling and nuclear retention of PER1 and its repressive role on the clock transcription factors CLOCK and BMAL1. The chain is Ubiquitin carboxyl-terminal hydrolase 2 (USP2) from Bos taurus (Bovine).